The sequence spans 109 residues: Large ribosomal subunit protein uL24 (109 aa).

It belongs to the universal ribosomal protein uL24 family. In terms of assembly, part of the 50S ribosomal subunit.

One of two assembly initiator proteins, it binds directly to the 5'-end of the 23S rRNA, where it nucleates assembly of the 50S subunit. Functionally, one of the proteins that surrounds the polypeptide exit tunnel on the outside of the subunit. This is Large ribosomal subunit protein uL24 from Mesoplasma florum (strain ATCC 33453 / NBRC 100688 / NCTC 11704 / L1) (Acholeplasma florum).